The chain runs to 61 residues: Potassium channel toxin alpha-KTx 6.9 (61 aa).

The N-terminal stretch at 1–23 is a signal peptide; that stretch reads MNAKFILLLLVVTTTTLLPDAKG. 4 disulfide bridges follow: C29/C50, C35/C55, C39/C57, and C45/C60.

This sequence belongs to the short scorpion toxin superfamily. Potassium channel inhibitor family. Alpha-KTx 06 subfamily. In terms of tissue distribution, expressed by the venom gland.

The protein localises to the secreted. Its function is as follows. Inhibits Kv1.2/KCNA2 and Kv1.3/KCNA3 voltage-gated potassium channels. This chain is Potassium channel toxin alpha-KTx 6.9, found in Opistophthalmus carinatus (African yellow leg scorpion).